The primary structure comprises 136 residues: Monothiol glutaredoxin-S3 (136 aa).

A Glutaredoxin domain is found at 18–135 (EREVRRAVEE…PVLKQAGALW (118 aa)). Cys38 contacts [2Fe-2S] cluster. The short motif at 133 to 136 (ALWL) is the Responsive for interaction with TGA factors element.

The protein belongs to the glutaredoxin family. CC-type subfamily.

The protein localises to the cytoplasm. It localises to the nucleus. May only reduce GSH-thiol disulfides, but not protein disulfides. The chain is Monothiol glutaredoxin-S3 (GRXS3) from Oryza sativa subsp. japonica (Rice).